The following is a 263-amino-acid chain: MILDEIIEKTKEDLILRKEKLNFEELEKKLKTINSKPKDVKTFLKSTKEEPIRIIAEVKKASPSKGIIKEDFNPLEIALEYSQNGANAISVLTEPHYFKGNLEYLSTIKNSVSTPLLRKDFIVDKYQIAEALLYGADFILLIAKALNEKELKELYEYARSLDLEVLVEIHDNEDLTKALNSNATIIGINHRNLGTFEMDMALCDKLIPLIPKDKIIVAESGVSDTEVIKRLHNVGADAFLIGEHFMRVPSIKDELTKFKNTLN.

This sequence belongs to the TrpC family.

The enzyme catalyses 1-(2-carboxyphenylamino)-1-deoxy-D-ribulose 5-phosphate + H(+) = (1S,2R)-1-C-(indol-3-yl)glycerol 3-phosphate + CO2 + H2O. It participates in amino-acid biosynthesis; L-tryptophan biosynthesis; L-tryptophan from chorismate: step 4/5. The polypeptide is Indole-3-glycerol phosphate synthase (Aliarcobacter butzleri (strain RM4018) (Arcobacter butzleri)).